The following is a 501-amino-acid chain: L-arabinose isomerase (501 aa).

The Mn(2+) site is built by glutamate 306, glutamate 333, histidine 350, and histidine 449.

The protein belongs to the arabinose isomerase family. Requires Mn(2+) as cofactor.

It catalyses the reaction beta-L-arabinopyranose = L-ribulose. The protein operates within carbohydrate degradation; L-arabinose degradation via L-ribulose; D-xylulose 5-phosphate from L-arabinose (bacterial route): step 1/3. Its function is as follows. Catalyzes the conversion of L-arabinose to L-ribulose. This chain is L-arabinose isomerase, found in Mycolicibacterium smegmatis (strain ATCC 700084 / mc(2)155) (Mycobacterium smegmatis).